An 818-amino-acid chain; its full sequence is Exchange factor for Arf-6 (818 aa).

4 disordered regions span residues 92–123 (AQKLSRLPVPVSTSQIERRGSLARKTSEESSP), 137–168 (MESTDVEESEEETVMMTTDEKENQKKPNENDD), 208–291 (NHHH…GVSN), and 326–383 (RTTP…VGGE). The span at 107-119 (IERRGSLARKTSE) shows a compositional bias: basic and acidic residues. Residues 140–149 (TDVEESEEET) are compositionally biased toward acidic residues. Residues 154–165 (TDEKENQKKPNE) show a composition bias toward basic and acidic residues. Composition is skewed to polar residues over residues 213 to 223 (YNSSPQISTLS) and 255 to 269 (MSNNSHQQSFRSPEN). A compositionally biased stretch (low complexity) spans 326–347 (RTTPNTAASNSSASASPSLHAT). In terms of domain architecture, SEC7 spans 356 to 532 (GVSLRSAESS…KTLFQSIKDN (177 aa)). Polar residues predominate over residues 361–380 (SAESSNLNQTAVPSTSTNSV). A PH domain is found at 569-681 (VEYYSGFLMR…WCEKINFVAA (113 aa)). Over residues 782 to 799 (TMNIMMTPTRRQQQNQKP) the composition is skewed to polar residues. Positions 782 to 818 (TMNIMMTPTRRQQQNQKPVVSEDRLSYTDAVNGAAAH) are disordered.

Interacts (via short N-terminal region) with microtubule-associated proteins tac-1 and zyg-8.

Its subcellular location is the cytoplasm. It localises to the cell cortex. The protein localises to the cell membrane. Its function is as follows. Guanine nucleotide exchange factor for arf-6. Involved in response to injury in mechanosensory neurons. Inhibits axon regrowth via microtubule dynamics, possibly by inducing axonal microtubule catastrophes. Limits microtubule growth near the cellular cortex of early embryonic cells. The polypeptide is Exchange factor for Arf-6 (Caenorhabditis elegans).